A 489-amino-acid polypeptide reads, in one-letter code: Probable apyrase 1 (489 aa).

The Cytoplasmic segment spans residues methionine 1 to arginine 28. The helical; Signal-anchor for type II membrane protein transmembrane segment at glycine 29–proline 49 threads the bilayer. At arginine 50 to serine 489 the chain is on the extracellular side. Position 89-99 (valine 89–arginine 99) interacts with ATP. The active-site Proton acceptor is the glutamate 211. Residue glycine 235–glutamine 245 participates in ATP binding.

It belongs to the GDA1/CD39 NTPase family. The cofactor is Ca(2+).

Its subcellular location is the membrane. It catalyses the reaction a ribonucleoside 5'-triphosphate + 2 H2O = a ribonucleoside 5'-phosphate + 2 phosphate + 2 H(+). Its function is as follows. Catalyzes the hydrolysis of phosphoanhydride bonds of nucleoside tri- and di-phosphates. The chain is Probable apyrase 1 (APY1) from Oryza sativa subsp. japonica (Rice).